Consider the following 196-residue polypeptide: Large ribosomal subunit protein bL9 (196 aa).

Residues 172 to 196 (NESARPEAFFDPEAEIEQEEGEENA) are disordered. A compositionally biased stretch (acidic residues) spans 181 to 196 (FDPEAEIEQEEGEENA).

Belongs to the bacterial ribosomal protein bL9 family.

Its function is as follows. Binds to the 23S rRNA. The polypeptide is Large ribosomal subunit protein bL9 (Chelativorans sp. (strain BNC1)).